The primary structure comprises 243 residues: 1-(5-phosphoribosyl)-5-[(5-phosphoribosylamino)methylideneamino] imidazole-4-carboxamide isomerase (243 aa).

The Proton acceptor role is filled by aspartate 10. The Proton donor role is filled by aspartate 129.

It belongs to the HisA/HisF family.

The protein resides in the cytoplasm. The catalysed reaction is 1-(5-phospho-beta-D-ribosyl)-5-[(5-phospho-beta-D-ribosylamino)methylideneamino]imidazole-4-carboxamide = 5-[(5-phospho-1-deoxy-D-ribulos-1-ylimino)methylamino]-1-(5-phospho-beta-D-ribosyl)imidazole-4-carboxamide. It participates in amino-acid biosynthesis; L-histidine biosynthesis; L-histidine from 5-phospho-alpha-D-ribose 1-diphosphate: step 4/9. The chain is 1-(5-phosphoribosyl)-5-[(5-phosphoribosylamino)methylideneamino] imidazole-4-carboxamide isomerase from Saccharopolyspora erythraea (strain ATCC 11635 / DSM 40517 / JCM 4748 / NBRC 13426 / NCIMB 8594 / NRRL 2338).